The sequence spans 118 residues: Acidic phospholipase A2 homolog (118 aa).

Disulfide bonds link Cys11-Cys70, Cys25-Cys117, Cys27-Cys43, Cys42-Cys98, Cys49-Cys91, Cys59-Cys84, and Cys77-Cys89.

The protein belongs to the phospholipase A2 family. Group I subfamily. A49 sub-subfamily. As to expression, expressed by the venom gland.

Its subcellular location is the secreted. In terms of biological role, snake venom phospholipase A2 (PLA2) homolog that lacks both catalytic and neurotoxicity activities. The polypeptide is Acidic phospholipase A2 homolog (Bungarus fasciatus (Banded krait)).